A 55-amino-acid chain; its full sequence is Large ribosomal subunit protein bL33 (55 aa).

It belongs to the bacterial ribosomal protein bL33 family.

The chain is Large ribosomal subunit protein bL33 from Allorhizobium ampelinum (strain ATCC BAA-846 / DSM 112012 / S4) (Agrobacterium vitis (strain S4)).